A 167-amino-acid polypeptide reads, in one-letter code: Putative NADH-quinone oxidoreductase subunit B 2 (167 aa).

This sequence belongs to the complex I 20 kDa subunit family. As to quaternary structure, NDH-1 is composed of 14 different subunits. Subunits NuoB, C, D, E, F, and G constitute the peripheral sector of the complex.

It localises to the cell inner membrane. The catalysed reaction is a quinone + NADH + 5 H(+)(in) = a quinol + NAD(+) + 4 H(+)(out). In terms of biological role, NDH-1 shuttles electrons from NADH, via FMN and iron-sulfur (Fe-S) centers, to quinones in the respiratory chain. Couples the redox reaction to proton translocation (for every two electrons transferred, four hydrogen ions are translocated across the cytoplasmic membrane), and thus conserves the redox energy in a proton gradient. The chain is Putative NADH-quinone oxidoreductase subunit B 2 from Burkholderia pseudomallei (strain 1710b).